Here is a 196-residue protein sequence, read N- to C-terminus: DnaA initiator-associating protein DiaA (196 aa).

The region spanning 34–196 is the SIS domain; it reads LVQSLLNGNK…DNTLFPHQAD (163 aa).

Belongs to the SIS family. DiaA subfamily. Homotetramer; dimer of dimers.

Its function is as follows. Required for the timely initiation of chromosomal replication via direct interactions with the DnaA initiator protein. The chain is DnaA initiator-associating protein DiaA from Edwardsiella ictaluri (strain 93-146).